The chain runs to 279 residues: Putative pyruvate, phosphate dikinase regulatory protein (279 aa).

ADP is bound at residue 153 to 160 (GVSRTSKT).

It belongs to the pyruvate, phosphate/water dikinase regulatory protein family. PDRP subfamily.

The enzyme catalyses N(tele)-phospho-L-histidyl/L-threonyl-[pyruvate, phosphate dikinase] + ADP = N(tele)-phospho-L-histidyl/O-phospho-L-threonyl-[pyruvate, phosphate dikinase] + AMP + H(+). It catalyses the reaction N(tele)-phospho-L-histidyl/O-phospho-L-threonyl-[pyruvate, phosphate dikinase] + phosphate + H(+) = N(tele)-phospho-L-histidyl/L-threonyl-[pyruvate, phosphate dikinase] + diphosphate. Its function is as follows. Bifunctional serine/threonine kinase and phosphorylase involved in the regulation of the pyruvate, phosphate dikinase (PPDK) by catalyzing its phosphorylation/dephosphorylation. The protein is Putative pyruvate, phosphate dikinase regulatory protein of Bradyrhizobium sp. (strain ORS 278).